The following is an 89-amino-acid chain: Putative regulatory protein CYA_2696 (89 aa).

The protein belongs to the RemA family.

The sequence is that of Putative regulatory protein CYA_2696 from Synechococcus sp. (strain JA-3-3Ab) (Cyanobacteria bacterium Yellowstone A-Prime).